The sequence spans 247 residues: Suppressor of silencing P0 (247 aa).

An F-box-like domain is found at Leu-76 to Pro-95.

It belongs to the polerovirus P0 protein family.

Functionally, suppressor of RNA-mediated gene silencing, also known as post-transcriptional gene silencing (PTGS), a mechanism of plant viral defense that limits the accumulation of viral RNAs. The P0 protein suppresses local PTGS using its F-box-like domain to mediate destabilization and degradation of the AGO1 protein, although not via an interaction with host SKP1A. Participates, together with the proteins P1 and P7, in the inhibition of the induction of aphid-induced host phytohormones. This could play a role in the attraction to the infected plants by aphids. This is Suppressor of silencing P0 from Potato leafroll virus (strain Potato/Scotland/strain 1/1984) (PLrV).